A 416-amino-acid chain; its full sequence is Beta sliding clamp (416 aa).

This sequence belongs to the beta sliding clamp family. In terms of assembly, forms a ring-shaped head-to-tail homodimer around DNA which binds and tethers DNA polymerases and other proteins to the DNA. The DNA replisome complex has a single clamp-loading complex (3 tau and 1 each of delta, delta', psi and chi subunits) which binds 3 Pol III cores (1 core on the leading strand and 2 on the lagging strand) each with a beta sliding clamp dimer. Additional proteins in the replisome are other copies of gamma, psi and chi, Ssb, DNA helicase and RNA primase.

The protein resides in the cytoplasm. In terms of biological role, confers DNA tethering and processivity to DNA polymerases and other proteins. Acts as a clamp, forming a ring around DNA (a reaction catalyzed by the clamp-loading complex) which diffuses in an ATP-independent manner freely and bidirectionally along dsDNA. Initially characterized for its ability to contact the catalytic subunit of DNA polymerase III (Pol III), a complex, multichain enzyme responsible for most of the replicative synthesis in bacteria; Pol III exhibits 3'-5' exonuclease proofreading activity. The beta chain is required for initiation of replication as well as for processivity of DNA replication. The sequence is that of Beta sliding clamp (dnaN) from Chlamydia trachomatis serovar D (strain ATCC VR-885 / DSM 19411 / UW-3/Cx).